Consider the following 158-residue polypeptide: Respiratory supercomplex factor 1, mitochondrial (158 aa).

Positions 5-96 constitute an HIG1 domain; the sequence is PSSFDSDADD…TNKNERESHE (92 aa). Helical transmembrane passes span 32 to 52 and 68 to 88; these read PLVP…VLNV and VALQ…YGTN. Positions 88–158 form a coiled coil; the sequence is NKNERESHEE…LKDLEERLKK (71 aa). Residues 128 to 158 form a disordered region; it reads AELARQKAKEMEQETSKLQQELKDLEERLKK.

It belongs to the RCF1 family. Associates with the respiratory chain complex III/complex IV supercomplex.

It is found in the mitochondrion membrane. Cytochrome c oxidase subunit which plays a role in assembly of respiratory supercomplexes. This Kluyveromyces lactis (strain ATCC 8585 / CBS 2359 / DSM 70799 / NBRC 1267 / NRRL Y-1140 / WM37) (Yeast) protein is Respiratory supercomplex factor 1, mitochondrial (RCF1).